The primary structure comprises 228 residues: Cytidylate kinase (228 aa).

An ATP-binding site is contributed by 12-20; the sequence is GPSGSGKGT.

It belongs to the cytidylate kinase family. Type 1 subfamily.

The protein resides in the cytoplasm. The enzyme catalyses CMP + ATP = CDP + ADP. It carries out the reaction dCMP + ATP = dCDP + ADP. This Pseudomonas putida (strain ATCC 47054 / DSM 6125 / CFBP 8728 / NCIMB 11950 / KT2440) protein is Cytidylate kinase.